Here is a 386-residue protein sequence, read N- to C-terminus: DNA replication and repair protein RecF (386 aa).

30 to 37 provides a ligand contact to ATP; sequence GANAQGKT.

Belongs to the RecF family.

The protein resides in the cytoplasm. Functionally, the RecF protein is involved in DNA metabolism; it is required for DNA replication and normal SOS inducibility. RecF binds preferentially to single-stranded, linear DNA. It also seems to bind ATP. The protein is DNA replication and repair protein RecF of Natranaerobius thermophilus (strain ATCC BAA-1301 / DSM 18059 / JW/NM-WN-LF).